The primary structure comprises 562 residues: MVKIVTVKTQAYQDQKPGTSGLRKRVKVFQSSANYAENFIQSIISTVEPAQRQEATLVVGGDGRFYMKEAIQLIARIAAANGIGRLVIGQNGILSTPAVSCIIRKIKAIGGIILTASHNPGGPNGDFGIKFNISNGGPAPEAITDKIFQISKTIEEYAVCPDLKVDLGVLGKQQFDLENKFKPFTVEIVDSVEAYATMLRSIFDFSALKELLSGPNRLKIRIDAMHGVVGPYVKKILCEELGAPANSAVNCVPLEDFGGHHPDPNLTYAADLVETMKSGEHDFGAAFDGDGDRNMILGKHGFFVNPSDSVAVIAANIFSIPYFQQTGVRGFARSMPTSGALDRVASATKIALYETPTGWKFFGNLMDASKLSLCGEESFGTGSDHIREKDGLWAVLAWLSILATRKQSVEDILKDHWQKYGRNFFTRYDYEEVEAEGANKMMKDLEALMFDRSFVGKQFSANDKVYTVEKADNFEYSDPVDGSISRNQGLRLIFTDGSRIVFRLSGTGSAGATIRLYIDSYEKDVAKINQDPQVMLAPLISIALKVSQLQERTGRTAPTVIT.

At M1 the chain carries N-acetylmethionine. Position 16 is an N6-acetyllysine (K16). R23 provides a ligand contact to alpha-D-glucose 1,6-bisphosphate. A Phosphothreonine modification is found at T115. S117 provides a ligand contact to alpha-D-glucose 1,6-bisphosphate. S117 acts as the Phosphoserine intermediate in catalysis. Position 117 (S117) interacts with Mg(2+). S117 and S134 each carry phosphoserine. Phosphothreonine is present on T185. Phosphoserine occurs at positions 201, 206, and 213. Mg(2+) is bound by residues D288, D290, and D292. Residues D292 and R293 each contribute to the alpha-D-glucose 1,6-bisphosphate site. Residue K349 is modified to N6-acetyllysine. The residue at position 353 (Y353) is a Phosphotyrosine. Alpha-D-glucose 1,6-bisphosphate is bound at residue T357. Phosphoserine is present on S369. Residues E376, S378, and K389 each contribute to the alpha-D-glucose 1,6-bisphosphate site. Residue S378 is modified to Phosphoserine. The residue at position 419 (K419) is an N6-succinyllysine. T467 is modified (phosphothreonine; by PAK1). 3 positions are modified to phosphoserine: S477, S485, and S505. T507 carries the phosphothreonine modification. S509 and S541 each carry phosphoserine.

The protein belongs to the phosphohexose mutase family. As to quaternary structure, monomer. It depends on Mg(2+) as a cofactor. In terms of processing, phosphorylation at Thr-467 by PAK1 significantly enhances enzymatic activity.

It localises to the cytoplasm. It carries out the reaction alpha-D-glucose 1-phosphate = alpha-D-glucose 6-phosphate. The enzyme catalyses O-phospho-L-seryl-[protein] + alpha-D-glucose 1-phosphate = alpha-D-glucose 1,6-bisphosphate + L-seryl-[protein]. The catalysed reaction is alpha-D-glucose 1,6-bisphosphate + L-seryl-[protein] = O-phospho-L-seryl-[protein] + alpha-D-glucose 6-phosphate. Its activity is regulated as follows. Glucose-1,6-bisphosphate enhances phosphorylation of the active site Ser-117, and thereby increases enzyme activity. Functionally, catalyzes the reversible isomerization of alpha-D-glucose 1-phosphate to alpha-D-glucose 6-phosphate. The mechanism proceeds via the intermediate compound alpha-D-glucose 1,6-bisphosphate. This enzyme participates in both the breakdown and synthesis of glucose. The sequence is that of Phosphoglucomutase-1 (PGM1) from Homo sapiens (Human).